The primary structure comprises 327 residues: Nocardicin C-9' epimerase (327 aa).

Lys43 is subject to N6-(pyridoxal phosphate)lysine.

This sequence belongs to the ACC deaminase/D-cysteine desulfhydrase family. It depends on pyridoxal 5'-phosphate as a cofactor.

The enzyme catalyses isonocardicin C = nocardicin C. The catalysed reaction is isonocardicin A = nocardicin A. Its pathway is antibiotic biosynthesis. Functionally, involved in the biosynthesis of the beta-lactam antibiotic nocardicin A. Catalyzes the interconversion of the nocardicin homoseryl side chain in both nocardicin A with isonocardicin A, and nocardicin C with isonocardicin C. The chain is Nocardicin C-9' epimerase from Nocardia uniformis subsp. tsuyamanensis.